The following is a 102-amino-acid chain: Small ribosomal subunit protein uS10 (102 aa).

This sequence belongs to the universal ribosomal protein uS10 family. As to quaternary structure, part of the 30S ribosomal subunit.

Involved in the binding of tRNA to the ribosomes. The protein is Small ribosomal subunit protein uS10 of Frankia alni (strain DSM 45986 / CECT 9034 / ACN14a).